The chain runs to 283 residues: Urease accessory protein UreD (283 aa).

It belongs to the UreD family. UreD, UreF and UreG form a complex that acts as a GTP-hydrolysis-dependent molecular chaperone, activating the urease apoprotein by helping to assemble the nickel containing metallocenter of UreC. The UreE protein probably delivers the nickel.

The protein localises to the cytoplasm. Required for maturation of urease via the functional incorporation of the urease nickel metallocenter. This chain is Urease accessory protein UreD, found in Rhodopseudomonas palustris (strain BisB5).